We begin with the raw amino-acid sequence, 200 residues long: HTH-type transcriptional regulator BetI (200 aa).

The 61-residue stretch at Ser-8–Leu-68 folds into the HTH tetR-type domain. Positions Ser-31–Phe-50 form a DNA-binding region, H-T-H motif.

Its pathway is amine and polyamine biosynthesis; betaine biosynthesis via choline pathway [regulation]. Its function is as follows. Repressor involved in the biosynthesis of the osmoprotectant glycine betaine. It represses transcription of the choline transporter BetT and the genes of BetAB involved in the synthesis of glycine betaine. This Proteus mirabilis (strain HI4320) protein is HTH-type transcriptional regulator BetI.